A 154-amino-acid polypeptide reads, in one-letter code: Transcriptional repressor NrdR (154 aa).

A zinc finger lies at 3-34; sequence CPFCGNVDTQVKDSRPAEDNVAIRRRRFCPAC. In terms of domain architecture, ATP-cone spans 49 to 139; the sequence is LVVVKSSGRR…VYKNFQAADD (91 aa).

It belongs to the NrdR family. Zn(2+) serves as cofactor.

Negatively regulates transcription of bacterial ribonucleotide reductase nrd genes and operons by binding to NrdR-boxes. This Paracoccus denitrificans (strain Pd 1222) protein is Transcriptional repressor NrdR.